A 312-amino-acid polypeptide reads, in one-letter code: L-lactate dehydrogenase (312 aa).

NAD(+) is bound by residues Val11, Asp32, Arg37, and Gly76 to Ala77. Substrate-binding positions include Gln79, Arg85, and Asn117–Asp120. NAD(+) is bound by residues Val115–Asn117 and Thr140. Asp145–Arg148 serves as a coordination point for substrate. 2 residues coordinate beta-D-fructose 1,6-bisphosphate: Arg150 and His165. His172 serves as the catalytic Proton acceptor. Tyr217 carries the phosphotyrosine modification. Thr226 serves as a coordination point for substrate.

Belongs to the LDH/MDH superfamily. LDH family. In terms of assembly, homotetramer.

It is found in the cytoplasm. The catalysed reaction is (S)-lactate + NAD(+) = pyruvate + NADH + H(+). It participates in fermentation; pyruvate fermentation to lactate; (S)-lactate from pyruvate: step 1/1. Its activity is regulated as follows. Allosterically activated by fructose 1,6-bisphosphate (FBP). In terms of biological role, catalyzes the conversion of lactate to pyruvate. The sequence is that of L-lactate dehydrogenase from Pseudothermotoga lettingae (strain ATCC BAA-301 / DSM 14385 / NBRC 107922 / TMO) (Thermotoga lettingae).